The sequence spans 999 residues: Probable metabotropic glutamate receptor mgl-1 (999 aa).

Residues Ser202, 223–225 (AST), Tyr273, Glu363, and Lys455 contribute to the L-glutamate site. The N-linked (GlcNAc...) asparagine glycan is linked to Asn518. The next 7 membrane-spanning stretches (helical) occupy residues 682-704 (SLVP…VVYV), 719-739 (LSYI…VLLS), 751-769 (TGIG…VKTN), 792-812 (VVMT…WLSV), 836-857 (HHFL…TYAV), 871-893 (FIGF…FFGT), and 904-929 (LCIS…IILF). Residues 975-999 (DSTRRRSSRKTSQPTSTSSAHDTFL) are disordered. The segment covering 984–993 (KTSQPTSTSS) has biased composition (low complexity).

The protein belongs to the G-protein coupled receptor 3 family.

It localises to the cell membrane. Its function is as follows. G-protein coupled receptor for glutamate. Ligand binding causes a conformation change that triggers signaling via guanine nucleotide-binding proteins (G proteins) and modulates the activity of down-stream effectors. The chain is Probable metabotropic glutamate receptor mgl-1 (mgl-1) from Caenorhabditis elegans.